The primary structure comprises 235 residues: Phosphoribosylaminoimidazole-succinocarboxamide synthase (235 aa).

It belongs to the SAICAR synthetase family.

It carries out the reaction 5-amino-1-(5-phospho-D-ribosyl)imidazole-4-carboxylate + L-aspartate + ATP = (2S)-2-[5-amino-1-(5-phospho-beta-D-ribosyl)imidazole-4-carboxamido]succinate + ADP + phosphate + 2 H(+). Its pathway is purine metabolism; IMP biosynthesis via de novo pathway; 5-amino-1-(5-phospho-D-ribosyl)imidazole-4-carboxamide from 5-amino-1-(5-phospho-D-ribosyl)imidazole-4-carboxylate: step 1/2. This is Phosphoribosylaminoimidazole-succinocarboxamide synthase from Clostridium perfringens (strain 13 / Type A).